Consider the following 177-residue polypeptide: T-cell receptor beta chain C region (177 aa).

The segment at 1-150 is c region; the sequence is EDLANVSAPQ…GVLSATVLYE (150 aa). Asn-5 and Asn-22 each carry an N-linked (GlcNAc...) asparagine glycan. Residues Cys-31 and Cys-96 are joined by a disulfide bond. The helical transmembrane segment at 146-168 threads the bilayer; sequence TVLYEILLGKATLYAVLVSALVL. Topologically, residues 169–177 are cytoplasmic; the sequence is MAMVKRKDS.

The protein localises to the membrane. This Oryctolagus cuniculus (Rabbit) protein is T-cell receptor beta chain C region.